Here is a 183-residue protein sequence, read N- to C-terminus: Ferritin heavy chain (183 aa).

Residue Met-1 is modified to N-acetylmethionine. The residue at position 2 (Thr-2) is an N-acetylthreonine; in Ferritin heavy chain, N-terminally processed. One can recognise a Ferritin-like diiron domain in the interval 11–160 (QNYHQDSEAA…DHVTNLRKMG (150 aa)). Glu-28, Glu-63, His-66, Glu-108, and Gln-142 together coordinate Fe cation. Residues Ser-179 and Ser-183 each carry the phosphoserine modification.

Belongs to the ferritin family. As to quaternary structure, oligomer of 24 subunits. There are two types of subunits: L (light) chain and H (heavy) chain. The major chain can be light or heavy, depending on the species and tissue type. The functional molecule forms a roughly spherical shell with a diameter of 12 nm and contains a central cavity into which the insoluble mineral iron core is deposited. Interacts with NCOA4; NCOA4 promotes targeting of the iron-binding ferritin complex to autolysosomes following starvation or iron depletion.

The protein resides in the cytoplasm. It localises to the lysosome. Its subcellular location is the cytoplasmic vesicle. It is found in the autophagosome. It carries out the reaction 4 Fe(2+) + O2 + 4 H(+) = 4 Fe(3+) + 2 H2O. Stores iron in a soluble, non-toxic, readily available form. Important for iron homeostasis. Has ferroxidase activity. Iron is taken up in the ferrous form and deposited as ferric hydroxides after oxidation. Also plays a role in delivery of iron to cells. Mediates iron uptake in capsule cells of the developing kidney. Delivery to lysosomes is mediated by the cargo receptor NCOA4 for autophagic degradation and release of iron. The polypeptide is Ferritin heavy chain (FTH1) (Felis catus (Cat)).